The following is a 580-amino-acid chain: Guanine nucleotide-binding protein alpha-4 subunit (580 aa).

A compositionally biased stretch (polar residues) spans 1–10; the sequence is MSPSVSSPQL. A disordered region spans residues 1–28; sequence MSPSVSSPQLRHTKSNRAISRIDRTDPL. One can recognise a G-alpha domain in the interval 93–579; sequence RVYKMVLLGQ…RENLKLTGLV (487 aa). Residues 96–109 form a G1 motif region; the sequence is KMVLLGQAGAGKTT. Residue 101–108 participates in GTP binding; that stretch reads GQAGAGKT. Disordered stretches follow at residues 160 to 196 and 302 to 325; these read KSSE…PNDA and GRAA…KDNS. A compositionally biased stretch (low complexity) spans 167–183; the sequence is LESSTSASTSTSASASS. The tract at residues 387 to 395 is G2 motif; the sequence is DILHSRVRT. GTP is bound by residues 389 to 395, 415 to 419, 484 to 487, and Ala-551; these read LHSRVRT, DVGGS, and NKID. Mg(2+) is bound at residue Thr-395. Positions 411–420 are G3 motif; sequence YRIYDVGGSR. The G4 motif stretch occupies residues 480–487; sequence ILFLNKID. Residues 549 to 554 form a G5 motif region; that stretch reads TVATST.

This sequence belongs to the G-alpha family. In terms of assembly, g proteins are composed of 3 units; alpha, beta and gamma. The alpha chain contains the guanine nucleotide binding site.

Functionally, guanine nucleotide-binding proteins (G proteins) are involved as modulators or transducers in various transmembrane signaling systems. The sequence is that of Guanine nucleotide-binding protein alpha-4 subunit (GPA4) from Mycosarcoma maydis (Corn smut fungus).